Consider the following 560-residue polypeptide: Eukaryotic translation initiation factor 3 subunit D-1 (560 aa).

The segment at 98–166 (VQKPPHQRGR…RGPPPKMRES (69 aa)) is disordered. A compositionally biased stretch (basic residues) spans 100–121 (KPPHQRGRFRNMRNSRSGRGRN). T128 is subject to Phosphothreonine. A compositionally biased stretch (basic residues) spans 147 to 156 (GRGMGKKFGH). Positions 291–305 (EFDLLTVNESSVEPP) are RNA gate.

It belongs to the eIF-3 subunit D family. In terms of assembly, component of the eukaryotic translation initiation factor 3 (eIF-3) complex. The eIF-3 complex interacts with pix.

Its subcellular location is the cytoplasm. Its function is as follows. mRNA cap-binding component of the eukaryotic translation initiation factor 3 (eIF-3) complex, which is involved in protein synthesis of a specialized repertoire of mRNAs and, together with other initiation factors, stimulates binding of mRNA and methionyl-tRNAi to the 40S ribosome. The eIF-3 complex specifically targets and initiates translation of a subset of mRNAs involved in cell proliferation. In the eIF-3 complex, eif3d specifically recognizes and binds the 7-methylguanosine cap of a subset of mRNAs. The protein is Eukaryotic translation initiation factor 3 subunit D-1 of Drosophila sechellia (Fruit fly).